Consider the following 552-residue polypeptide: Thermosome subunit beta (552 aa).

It belongs to the TCP-1 chaperonin family. Forms a Heterooligomeric complex of two stacked nine-membered rings; one of alpha and the other of beta subunits. The N-terminus is blocked.

Functionally, molecular chaperone; binds unfolded polypeptides in vitro, and has a weak ATPase activity. The chain is Thermosome subunit beta (thsB) from Sulfurisphaera tokodaii (strain DSM 16993 / JCM 10545 / NBRC 100140 / 7) (Sulfolobus tokodaii).